We begin with the raw amino-acid sequence, 434 residues long: Enolase (434 aa).

Gln-163 lines the (2R)-2-phosphoglycerate pocket. Glu-205 (proton donor) is an active-site residue. 3 residues coordinate Mg(2+): Asp-243, Glu-291, and Asp-318. Positions 343, 372, 373, and 394 each coordinate (2R)-2-phosphoglycerate. The Proton acceptor role is filled by Lys-343.

Belongs to the enolase family. Requires Mg(2+) as cofactor.

It is found in the cytoplasm. The protein localises to the secreted. The protein resides in the cell surface. The catalysed reaction is (2R)-2-phosphoglycerate = phosphoenolpyruvate + H2O. It participates in carbohydrate degradation; glycolysis; pyruvate from D-glyceraldehyde 3-phosphate: step 4/5. Catalyzes the reversible conversion of 2-phosphoglycerate (2-PG) into phosphoenolpyruvate (PEP). It is essential for the degradation of carbohydrates via glycolysis. This Fusobacterium nucleatum subsp. nucleatum (strain ATCC 25586 / DSM 15643 / BCRC 10681 / CIP 101130 / JCM 8532 / KCTC 2640 / LMG 13131 / VPI 4355) protein is Enolase.